Consider the following 314-residue polypeptide: Hydroxyacyl-coenzyme A dehydrogenase, mitochondrial (314 aa).

Residues 1-12 (MAFVTRQFVRSM) constitute a mitochondrion transit peptide. NAD(+)-binding positions include 34 to 39 (GGGLMG) and aspartate 57. Serine 73 lines the CoA pocket. At lysine 75 the chain carries N6-acetyllysine. Lysine 80 serves as a coordination point for CoA. Lysine 80 bears the N6-succinyllysine mark. 2 positions are modified to N6-acetyllysine; alternate: lysine 81 and lysine 87. An N6-succinyllysine; alternate mark is found at lysine 81 and lysine 87. Glutamate 122 lines the NAD(+) pocket. Lysine 125 bears the N6-acetyllysine mark. Lysine 127 is an NAD(+) binding site. An N6-(2-hydroxyisobutyryl)lysine modification is found at lysine 127. Lysine 136 bears the N6-acetyllysine; alternate mark. Lysine 136 bears the N6-succinyllysine; alternate mark. NAD(+)-binding residues include serine 149 and asparagine 173. A CoA-binding site is contributed by serine 149. An N6-acetyllysine modification is found at lysine 179. N6-acetyllysine; alternate is present on residues lysine 185, lysine 192, and lysine 202. An N6-succinyllysine; alternate mark is found at lysine 185, lysine 192, and lysine 202. Lysine 206 is subject to N6-succinyllysine. N6-acetyllysine; alternate is present on residues lysine 212 and lysine 241. Residues lysine 212 and lysine 241 each carry the N6-succinyllysine; alternate modification. Lysine 305 is a binding site for NAD(+). Lysine 312 is modified (N6-acetyllysine; alternate). Residue lysine 312 is modified to N6-succinyllysine; alternate.

This sequence belongs to the 3-hydroxyacyl-CoA dehydrogenase family. As to quaternary structure, homodimer. Interacts with GLUD1; this interaction inhibits the activation of glutamate dehydrogenase 1 (GLUD1). In terms of processing, succinylation at Lys-81, adjacent to a coenzyme A binding site. Desuccinylated by SIRT5.

Its subcellular location is the mitochondrion matrix. It catalyses the reaction a (3S)-3-hydroxyacyl-CoA + NAD(+) = a 3-oxoacyl-CoA + NADH + H(+). The catalysed reaction is (3S)-3-hydroxybutanoyl-CoA + NAD(+) = acetoacetyl-CoA + NADH + H(+). The enzyme catalyses (3S)-hydroxydecanoyl-CoA + NAD(+) = 3-oxodecanoyl-CoA + NADH + H(+). It carries out the reaction (3S)-hydroxyhexadecanoyl-CoA + NAD(+) = 3-oxohexadecanoyl-CoA + NADH + H(+). The protein operates within lipid metabolism; fatty acid beta-oxidation. In terms of biological role, mitochondrial fatty acid beta-oxidation enzyme that catalyzes the third step of the beta-oxidation cycle for medium and short-chain 3-hydroxy fatty acyl-CoAs (C4 to C10). Plays a role in the control of insulin secretion by inhibiting the activation of glutamate dehydrogenase 1 (GLUD1), an enzyme that has an important role in regulating amino acid-induced insulin secretion. Plays a role in the maintenance of normal spermatogenesis through the reduction of fatty acid accumulation in the testes. The sequence is that of Hydroxyacyl-coenzyme A dehydrogenase, mitochondrial (Hadh) from Rattus norvegicus (Rat).